A 221-amino-acid chain; its full sequence is uncharacterized protein (221 aa).

To E.coli YheO.

This is an uncharacterized protein from Haemophilus influenzae (strain ATCC 51907 / DSM 11121 / KW20 / Rd).